The sequence spans 1405 residues: DNA-directed RNA polymerase subunit beta' (1405 aa).

Zn(2+) is bound by residues Cys-70, Cys-72, Cys-85, and Cys-88. Positions 460, 462, and 464 each coordinate Mg(2+). 4 residues coordinate Zn(2+): Cys-814, Cys-888, Cys-895, and Cys-898.

It belongs to the RNA polymerase beta' chain family. In terms of assembly, the RNAP catalytic core consists of 2 alpha, 1 beta, 1 beta' and 1 omega subunit. When a sigma factor is associated with the core the holoenzyme is formed, which can initiate transcription. It depends on Mg(2+) as a cofactor. Zn(2+) is required as a cofactor.

It carries out the reaction RNA(n) + a ribonucleoside 5'-triphosphate = RNA(n+1) + diphosphate. Functionally, DNA-dependent RNA polymerase catalyzes the transcription of DNA into RNA using the four ribonucleoside triphosphates as substrates. In Shewanella putrefaciens (strain CN-32 / ATCC BAA-453), this protein is DNA-directed RNA polymerase subunit beta'.